Here is a 227-residue protein sequence, read N- to C-terminus: Ribose-5-phosphate isomerase A (227 aa).

Substrate contacts are provided by residues 26–29 (TGST), 82–85 (DGAD), and 95–98 (KGGG). The Proton acceptor role is filled by E104. A substrate-binding site is contributed by K122.

This sequence belongs to the ribose 5-phosphate isomerase family. As to quaternary structure, homodimer.

It catalyses the reaction aldehydo-D-ribose 5-phosphate = D-ribulose 5-phosphate. It participates in carbohydrate degradation; pentose phosphate pathway; D-ribose 5-phosphate from D-ribulose 5-phosphate (non-oxidative stage): step 1/1. In terms of biological role, catalyzes the reversible conversion of ribose-5-phosphate to ribulose 5-phosphate. In Streptococcus pneumoniae (strain Hungary19A-6), this protein is Ribose-5-phosphate isomerase A.